A 473-amino-acid chain; its full sequence is Phenolic acid decarboxylase (473 aa).

Mn(2+) contacts are provided by asparagine 160, histidine 182, and glutamate 224. Residues 160-165 (NVGIYR) and 181-182 (QH) contribute to the prenylated FMN site. Catalysis depends on glutamate 273, which acts as the Proton donor.

The protein belongs to the UbiD family. YclC subfamily. Requires prenylated FMN as cofactor. Mn(2+) is required as a cofactor.

It catalyses the reaction 4-hydroxybenzoate + H(+) = phenol + CO2. The catalysed reaction is vanillate + H(+) = guaiacol + CO2. In terms of biological role, involved in the non-oxidative decarboxylation and detoxification of phenolic derivatives under both aerobic and anaerobic conditions. Phenolic acid decarboxylase that catalyzes the reversible decarboxylation of 4-hydroxybenzoate and vanillate. Could also catalyze the decarboxylation of salicylate. Is not active on di- and tri-hydroxybenzoate derivatives. This Bacillus subtilis (strain 168) protein is Phenolic acid decarboxylase.